Consider the following 1384-residue polypeptide: Protein Gawky (1384 aa).

4 disordered regions span residues 1–99, 148–227, 263–335, and 447–501; these read MREA…VWTG, NGSS…DPRG, TAST…DDGT, and VGAP…SGWS. The tract at residues 1-205 is required for interaction with AGO1; that stretch reads MREALFSQDG…HRGGNGSGAT (205 aa). 2 sufficient for miRNA-mediated silencing regions span residues 1–605 and 605–830; these read MREA…SLGS and SYAD…SVHL. Residues 15–24 show a composition bias toward polar residues; the sequence is HVNQDTNWEV. Positions 150-171 are enriched in low complexity; that stretch reads SSNITGSSGVATGSSGNSSNAG. Residues 205-490 are minimal N-terminal region required for miRNA-mediated silencing; the sequence is TSSDPRDIRM…GVSWGNKQSK (286 aa). Positions 208-225 are enriched in basic and acidic residues; that stretch reads DPRDIRMIDPRDPIRGDP. Polar residues-rich tracts occupy residues 449–475 and 485–501; these read APSS…NSWS and GNKQ…SGWS. Positions 547–588 constitute a UBA domain; it reads IIKQSKQYRILVENGFKKEDVERALVIANMNIEEAADMLRAN. Disordered regions lie at residues 607-626, 809-841, 889-942, 962-1022, 1052-1102, 1188-1221, and 1318-1368; these read ADHN…PVNS, QNMQ…LRGH, TEFS…NKDW, EPGK…LSSS, TSPL…GVQT, SENE…GVGT, and GTAN…PSGR. A compositionally biased stretch (low complexity) spans 809-826; that stretch reads QNMQPTSQQQQPQQQQLP. The segment at 862–1115 is not required for interaction with AGO1 or miRNAs or for localization to P-bodies but necessary for miRNA-mediated silencing and for interaction with pAbp; that stretch reads YQGASNQQSR…NWTGGNTTWG (254 aa). Over residues 898 to 924 the composition is skewed to polar residues; sequence TKQNLTANTSNINSLGLQNDSTWSTGR. The tract at residues 940–1215 is sufficient for miRNA-mediated silencing; the sequence is KDWSVAQPTS…TSSSGTSGGN (276 aa). Over residues 1010–1022 the composition is skewed to low complexity; the sequence is SPTDLPPLSLSSS. The span at 1052–1061 shows a compositional bias: polar residues; it reads TSPLNKSSSR. The segment covering 1068 to 1084 has biased composition (low complexity); that stretch reads TANSNKSANSNASTPTT. One can recognise an RRM domain in the interval 1117–1189; the sequence is SWLLLKNLTA…TTIFAESPSE (73 aa). A compositionally biased stretch (polar residues) spans 1188–1203; that stretch reads SENEVQSIMQHLPQTP. Residues 1200-1384 form a not required for interaction with AGO1 or miRNAs or for localization to P-bodies but necessary for miRNA-mediated silencing, dissociation from AGO1 and miRNAs and interaction with pAbp region; that stretch reads PQTPSSTSSS…ISLVYSIVDD (185 aa). The segment covering 1211–1220 has biased composition (gly residues); sequence TSGGNVGGVG. Residues 1318–1349 show a composition bias toward low complexity; sequence GTANSSGSKSSANNLASGQSSASNLTNSTNST. Polar residues predominate over residues 1350–1365; it reads WRQTSQNQALQSQSRP.

This sequence belongs to the GW182 family. In terms of assembly, component of the miRNA-directed RNA-induced silencing complex (miRISC), composed of at least AGO1 and gw, which bind mature miRNAs and targets the selective destruction of homologous RNAs. Interacts (via N-terminal region) with AGO1 (via Piwi domain); the interaction is essential for localization of AGO1 in P-bodies and for miRNA-mediated silencing. Interacts with pAbp/PABPC1; this interaction interferes with the binding of pAbp to eIF4G and is required for miRNA-mediated silencing. Interacts with CCR4-NOT complex members Not1, Rga/NOT2, twin/CCR4, Pop2 and NOT3/5 and with PAN complex members CG8232/PAN2 and CG11486/PAN3.

The protein resides in the cytoplasm. Its subcellular location is the P-body. Functionally, required for gene silencing mediated by micro-RNAs (miRNAs). Silences both polyadenylated and deadenylated mRNAs. Required for miRNA-mediated translational repression and mRNA decay. Not required for miRNA target recognition. Necessary to initiate but not to maintain silencing. Promotes mRNA deadenylation through the recruitment of the CCR4-NOT and PAN complexes and promotes decapping by the DCP1-DCP2 complex. Dissociates from silenced mRNAs after deadenylation. Required for completion of nuclear divisions during early embryonic development. In Drosophila melanogaster (Fruit fly), this protein is Protein Gawky.